We begin with the raw amino-acid sequence, 967 residues long: Importin-alpha re-exporter (967 aa).

The Importin N-terminal domain maps to 20–95 (AEEALKVWEL…KREIINLMLK (76 aa)).

Belongs to the XPO2/CSE1 family. Binds with high affinity to importin-alpha only in the presence of RanGTP.

It is found in the cytoplasm. The protein resides in the nucleus envelope. Its function is as follows. Export receptor for importin alpha. Mediates importin-alpha re-export from the nucleus to the cytoplasm after import substrates have been released into the nucleoplasm. The polypeptide is Importin-alpha re-exporter (kap109) (Schizosaccharomyces pombe (strain 972 / ATCC 24843) (Fission yeast)).